The sequence spans 203 residues: Small ribosomal subunit protein uS4c (203 aa).

In terms of domain architecture, S4 RNA-binding spans 91 to 154 (MRLDNIIFRL…KYESIISKNI (64 aa)).

Belongs to the universal ribosomal protein uS4 family. Part of the 30S ribosomal subunit. Contacts protein S5. The interaction surface between S4 and S5 is involved in control of translational fidelity.

It is found in the plastid. The protein resides in the chloroplast. Functionally, one of the primary rRNA binding proteins, it binds directly to 16S rRNA where it nucleates assembly of the body of the 30S subunit. With S5 and S12 plays an important role in translational accuracy. The sequence is that of Small ribosomal subunit protein uS4c (rps4) from Lopidium struthiopteris (Moss).